The chain runs to 565 residues: MTQSQGQDPRLDTSRTIRAPHGTTLRAKSWLTEAPLRMLMNNLDPDVAEHPHALVVYGGIGRAARNWACFDKIVEVLERLEDDQTLLVQSGKPVGVFPTHKNAPRVLIANSNLVPHWANWEHFNELDKQGLMMYGQMTAGSWIYIGSQGIVQGTYETFVAVAKKHFAGEAKGRWVLTGGLGGMGGAQPLAATMAGFSMIAVECDESRIDYRLRTGYVDKKATTLDEALAIVKESDTPVSVGLLGNAADVFAELVERNITPDIVTDQTSAHDPLNGYLPQGWSMAYAAEMRQQDESAVVKAAKQSMAVQVKAMLALQTRGAATLDYGNNIRQMALEEGVENAFDFPGFVPAYIRPLFCEGIGPFRWAALSGDPEDIYKTDQKVKELIPDNPHLHNWLDMARERIQFQGLPARICWVGLKDRERLGQAFNEMVKNGELKAPIVIGRDHLDSGSVASPNRETEGMMDGSDAVSDWPLLNALLNTAGGATWVSLHHGGGVGMGFSQHSGMVICCDGTEDASARIARVLHNDPATGVMRHADAGYDIAKQCAAQQGLDLPMLNEELSKLK.

NAD(+) is bound by residues 58-59 (GG), glutamine 136, 182-184 (GMG), glutamate 202, arginine 207, 245-246 (NA), 266-270 (QTSAH), 276-277 (YL), and tyrosine 325. Residue cysteine 413 is part of the active site. Glycine 495 serves as a coordination point for NAD(+).

Belongs to the urocanase family. NAD(+) is required as a cofactor.

Its subcellular location is the cytoplasm. The catalysed reaction is 4-imidazolone-5-propanoate = trans-urocanate + H2O. The protein operates within amino-acid degradation; L-histidine degradation into L-glutamate; N-formimidoyl-L-glutamate from L-histidine: step 2/3. Functionally, catalyzes the conversion of urocanate to 4-imidazolone-5-propionate. The polypeptide is Urocanate hydratase (Vibrio vulnificus (strain YJ016)).